Reading from the N-terminus, the 1131-residue chain is Probable pre-mRNA-splicing factor ATP-dependent RNA helicase mog-1 (1131 aa).

6 stretches are compositionally biased toward basic and acidic residues: residues 1–12, 65–122, 139–148, 160–173, 180–225, and 407–416; these read MSDKRADGRLEG, RGVT…DRSG, WDQDDREGSS, RGER…DSER, RSER…WEEE, and GNYKESHQFA. Disordered regions lie at residues 1-225 and 389-416; these read MSDK…WEEE and MGVK…HQFA. The Helicase ATP-binding domain maps to 451–614; sequence MNVIRENNVV…FGGNCPTFTI (164 aa). 464–471 serves as a coordination point for ATP; that stretch reads GETGSGKT. Residues 561–564 carry the DEAH box motif; it reads DEAH. The Helicase C-terminal domain maps to 629–812; that stretch reads PVEDYVDAAV…NVVLLLKSLG (184 aa). Basic and acidic residues-rich tracts occupy residues 1085 to 1114 and 1121 to 1131; these read EMRE…RRVV and ARSERRKLWGL. The tract at residues 1085–1131 is disordered; the sequence is EMREAQKEMERRKEESDKAFKRPESSRRVVEVGSKSARSERRKLWGL.

Belongs to the DEAD box helicase family. DEAH subfamily. PRP16 sub-subfamily.

It localises to the nucleus. The catalysed reaction is ATP + H2O = ADP + phosphate + H(+). In terms of biological role, probable ATP-binding RNA helicase involved in pre-mRNA splicing. This is Probable pre-mRNA-splicing factor ATP-dependent RNA helicase mog-1 (mog-1) from Caenorhabditis elegans.